A 140-amino-acid chain; its full sequence is Profilin-2 (140 aa).

A2 carries the post-translational modification N-acetylalanine.

Belongs to the profilin family. As to quaternary structure, occurs in many kinds of cells as a complex with monomeric actin in a 1:1 ratio. Interacts with PFN2. In terms of assembly, interacts with ACTMAP (via N-terminus); the interaction may facilitate efficient cleavage of the acetylated N-terminus of immature actin by ACTMAP. In terms of tissue distribution, highly expressed in brain, skeletal muscle and kidney and less strongly in heart, placenta, lung and liver.

The protein localises to the cytoplasm. The protein resides in the cytoskeleton. Functionally, binds to actin and affects the structure of the cytoskeleton. At high concentrations, profilin prevents the polymerization of actin, whereas it enhances it at low concentrations. By binding to PIP2, it inhibits the formation of IP3 and DG. This is Profilin-2 (PFN2) from Homo sapiens (Human).